The chain runs to 597 residues: DNA mismatch repair protein MutL (597 aa).

Belongs to the DNA mismatch repair MutL/HexB family.

In terms of biological role, this protein is involved in the repair of mismatches in DNA. It is required for dam-dependent methyl-directed DNA mismatch repair. May act as a 'molecular matchmaker', a protein that promotes the formation of a stable complex between two or more DNA-binding proteins in an ATP-dependent manner without itself being part of a final effector complex. The sequence is that of DNA mismatch repair protein MutL from Rhodopseudomonas palustris (strain BisB5).